The sequence spans 375 residues: Alcohol dehydrogenase 3, mitochondrial (375 aa).

A mitochondrion-targeting transit peptide spans 1 to 24 (MLRTSTLFTRRVQPSLFSRNILRL). Cysteine 71 contacts Zn(2+). NAD(+) is bound by residues histidine 72, threonine 73, and histidine 76. 7 residues coordinate Zn(2+): histidine 94, glutamate 95, cysteine 125, cysteine 128, cysteine 131, cysteine 139, and cysteine 181. NAD(+) contacts are provided by glycine 208, glycine 209, leucine 210, aspartate 229, lysine 234, phenylalanine 249, valine 296, serine 321, valine 323, and arginine 368.

It belongs to the zinc-containing alcohol dehydrogenase family. As to quaternary structure, homotetramer. The cofactor is Zn(2+).

The protein resides in the mitochondrion matrix. It is found in the mitochondrion inner membrane. The enzyme catalyses a primary alcohol + NAD(+) = an aldehyde + NADH + H(+). It carries out the reaction a secondary alcohol + NAD(+) = a ketone + NADH + H(+). The catalysed reaction is ethanol + NAD(+) = acetaldehyde + NADH + H(+). It catalyses the reaction butan-1-ol + NAD(+) = butanal + NADH + H(+). The enzyme catalyses hexan-1-ol + NAD(+) = hexanal + NADH + H(+). Its function is as follows. Mitochondrial isozyme that reduces acetaldehyde to ethanol during the fermentation of glucose. Involved in the shuttling of mitochondrial reducing equivalents to the cytosol, where the redox balance is restored by NADH dehydrogenases on the external side of the mitochondrial inner membrane. Shows a high affinity for alcohols with a double bond conjugated to the alcohol group. In Saccharomyces cerevisiae (strain ATCC 204508 / S288c) (Baker's yeast), this protein is Alcohol dehydrogenase 3, mitochondrial (ADH3).